A 316-amino-acid polypeptide reads, in one-letter code: UDP-N-acetyl-2-amino-2-deoxy-D-glucuronate oxidase (316 aa).

NAD(+) contacts are provided by residues 11 to 13 (GYI), 32 to 37 (YDINDS), Glu55, 81 to 84 (NYLH), 101 to 102 (EK), Gln130, and 171 to 172 (WK).

This sequence belongs to the Gfo/Idh/MocA family. Homotetramer.

It carries out the reaction UDP-2-acetamido-2-deoxy-alpha-D-glucuronate + NAD(+) = UDP-2-acetamido-2-deoxy-alpha-D-ribo-hex-3-uluronate + NADH + H(+). The catalysed reaction is 2-hydroxyglutarate + NAD(+) = 2-oxoglutarate + NADH + H(+). It functions in the pathway bacterial outer membrane biogenesis; LPS O-antigen biosynthesis. Functionally, plays a role in the biosynthesis of B-band O antigen for serotype O5. Catalyzes the NAD-dependent oxidation of UDP-N-acetylglucosaminuronic acid (UDP-D-GlcNAcA) to UDP-2-acetamido-2-deoxy-3-oxo-D-glucuronic acid (UDP-3-oxo-D-GlcNAcA). Cannot use UDP-GlcNAc or UDP-GalNAc as the nucleotide sugar substrate, and can use only poorly UDP-D-glucuronic acid (UDP-GlcA). Undergoes an NAD(+) recycling mechanism using 2-oxoglutarate as an oxidant. The polypeptide is UDP-N-acetyl-2-amino-2-deoxy-D-glucuronate oxidase (Pseudomonas aeruginosa (strain ATCC 15692 / DSM 22644 / CIP 104116 / JCM 14847 / LMG 12228 / 1C / PRS 101 / PAO1)).